Here is a 355-residue protein sequence, read N- to C-terminus: Probable nitronate monooxygenase (355 aa).

Residues Asn71, Gln175, Gly180, Gly219, and 238-241 contribute to the FMN site; that span reads QMGT.

It belongs to the nitronate monooxygenase family. NMO class I subfamily. FMN serves as cofactor.

The enzyme catalyses 3 propionate 3-nitronate + 3 O2 + H2O = 3 3-oxopropanoate + 2 nitrate + nitrite + H2O2 + 3 H(+). In terms of biological role, nitronate monooxygenase that uses molecular oxygen to catalyze the oxidative denitrification of alkyl nitronates. Acts on propionate 3-nitronate (P3N), the presumed physiological substrate. Probably functions in the detoxification of P3N, a metabolic poison produced by plants and fungi as a defense mechanism. The chain is Probable nitronate monooxygenase from Staphylococcus saprophyticus subsp. saprophyticus (strain ATCC 15305 / DSM 20229 / NCIMB 8711 / NCTC 7292 / S-41).